A 796-amino-acid chain; its full sequence is Leucine--tRNA ligase (796 aa).

The 'HIGH' region signature appears at 40-51; that stretch reads PYPSASGLHVGH. A 'KMSKS' region motif is present at residues 569-573; sequence KMSKS. Position 572 (lysine 572) interacts with ATP.

This sequence belongs to the class-I aminoacyl-tRNA synthetase family.

The protein localises to the cytoplasm. The catalysed reaction is tRNA(Leu) + L-leucine + ATP = L-leucyl-tRNA(Leu) + AMP + diphosphate. This chain is Leucine--tRNA ligase, found in Bdellovibrio bacteriovorus (strain ATCC 15356 / DSM 50701 / NCIMB 9529 / HD100).